The following is a 360-amino-acid chain: G-box-binding factor 2 (360 aa).

Polar residues predominate over residues 1-16 (MGSNEEGNPTNNSDKP). 2 disordered regions span residues 1 to 26 (MGSN…EQSN) and 150 to 275 (KVGS…AETE). The span at 164 to 184 (SQSSENDGSSNGSDGNTTGGE) shows a compositional bias: low complexity. The segment covering 198 to 208 (TGERPSSQNSL) has biased composition (polar residues). The span at 246–264 (NEKEVKREKRKQSNRESAR) shows a compositional bias: basic and acidic residues. Residues 249 to 312 (EVKREKRKQS…EKLRLENEAI (64 aa)) enclose the bZIP domain. Positions 251–270 (KREKRKQSNRESARRSRLRK) are basic motif. The segment at 277–312 (LSVKVDALVAENMSLRSKLGQLNNESEKLRLENEAI) is leucine-zipper. The segment covering 335–352 (NSVSGSKTVQHQLLNASP) has biased composition (polar residues). The tract at residues 335-360 (NSVSGSKTVQHQLLNASPITDPVAAS) is disordered.

The protein belongs to the bZIP family. In terms of assembly, DNA-binding heterodimer. Interacts with GBF4. Interacts with BZIP16 and BZIP68. In terms of tissue distribution, found in both light and dark grown leaves.

It is found in the nucleus. Binds to the G-box motif (5'-CCACGTGG-3') of the rbcS-1A gene promoter. G-box and G-box-like motifs are cis-acting elements defined in promoters of certain plant genes which are regulated by such diverse stimuli as light-induction or hormone control. GBF2 is found to bind asymmetrically to the G-box. The chain is G-box-binding factor 2 (GBF2) from Arabidopsis thaliana (Mouse-ear cress).